A 494-amino-acid polypeptide reads, in one-letter code: NAD(P)H-quinone oxidoreductase subunit 2 B, chloroplastic (494 aa).

14 helical membrane passes run 13–33, 39–59, 81–101, 107–127, 131–151, 166–186, 211–231, 243–263, 277–297, 305–325, 336–356, 378–398, 411–433, and 468–488; these read SILP…IDLI, TPWL…ILLF, IFRL…IDYI, ALTE…FLCC, LVTI…LSGY, LLMG…LYGL, MFIS…LVPF, PTPV…ALAT, WHLL…FIAV, MLAY…IAAE, YMLI…LFGL, LSLV…GFFG, LYFL…LKII, and MIIC…IIAI.

Belongs to the complex I subunit 2 family. NDH is composed of at least 16 different subunits, 5 of which are encoded in the nucleus.

It is found in the plastid. The protein resides in the chloroplast thylakoid membrane. The catalysed reaction is a plastoquinone + NADH + (n+1) H(+)(in) = a plastoquinol + NAD(+) + n H(+)(out). It carries out the reaction a plastoquinone + NADPH + (n+1) H(+)(in) = a plastoquinol + NADP(+) + n H(+)(out). NDH shuttles electrons from NAD(P)H:plastoquinone, via FMN and iron-sulfur (Fe-S) centers, to quinones in the photosynthetic chain and possibly in a chloroplast respiratory chain. The immediate electron acceptor for the enzyme in this species is believed to be plastoquinone. Couples the redox reaction to proton translocation, and thus conserves the redox energy in a proton gradient. The chain is NAD(P)H-quinone oxidoreductase subunit 2 B, chloroplastic from Angiopteris evecta (Mule's foot fern).